Reading from the N-terminus, the 306-residue chain is MDLGSLISETRNPDTLDLDNLSTLDMVTKLNQQDTTVAGAVSRTLPQVAEAVDSAAATLLAGGRLIYIGAGTSGRLGVLDASECPPTFGIPHGVVIGLIAGGPAALVTSVEGAEDDEGLGISDLQAQNLSANDMVIGLAASGRTPYAIGALRYARQLGCRTAAISCNPHSPLALEAEIAISPLVGPEALTGSTRLKSGTAQKLVLNMISTGAMIKIGKVYQNLMVDMRASNVKLVDRARRMVCEATGCEVAQAESALQQAQYEVKTAILMILTDLTAEQAGQRLAMHGGFLRAALQGHSQQPQAHK.

Residues 55 to 218 (AAATLLAGGR…STGAMIKIGK (164 aa)) enclose the SIS domain. Glu-83 (proton donor) is an active-site residue. Glu-114 is an active-site residue.

It belongs to the GCKR-like family. MurNAc-6-P etherase subfamily. As to quaternary structure, homodimer.

The enzyme catalyses N-acetyl-D-muramate 6-phosphate + H2O = N-acetyl-D-glucosamine 6-phosphate + (R)-lactate. It functions in the pathway amino-sugar metabolism; 1,6-anhydro-N-acetylmuramate degradation. It participates in amino-sugar metabolism; N-acetylmuramate degradation. Its pathway is cell wall biogenesis; peptidoglycan recycling. Specifically catalyzes the cleavage of the D-lactyl ether substituent of MurNAc 6-phosphate, producing GlcNAc 6-phosphate and D-lactate. Together with AnmK, is also required for the utilization of anhydro-N-acetylmuramic acid (anhMurNAc) either imported from the medium or derived from its own cell wall murein, and thus plays a role in cell wall recycling. This is N-acetylmuramic acid 6-phosphate etherase from Erwinia tasmaniensis (strain DSM 17950 / CFBP 7177 / CIP 109463 / NCPPB 4357 / Et1/99).